The chain runs to 120 residues: C-type natriuretic peptide 4 (120 aa).

The signal sequence occupies residues 1–22 (MNLSYLVACGLMITLLSVRMGA). The propeptide occupies 23 to 96 (KPLSQAQQKS…PRRHKTGIKK (74 aa)). A disulfide bridge connects residues cysteine 104 and cysteine 120.

The protein belongs to the natriuretic peptide family.

Its subcellular location is the secreted. Functionally, exhibits natriuretic and vasodepressant activity. Has cGMP-stimulating activity. May help to regulate body fluid homeostasis in a variety of aquatic environments. This is C-type natriuretic peptide 4 from Takifugu rubripes (Japanese pufferfish).